Here is a 204-residue protein sequence, read N- to C-terminus: Ribosome maturation factor RimP (204 aa).

The interval 177-204 (NFDESQFDEIQETEGEEADEAETPITRH) is disordered. Over residues 181–198 (SQFDEIQETEGEEADEAE) the composition is skewed to acidic residues.

This sequence belongs to the RimP family.

Its subcellular location is the cytoplasm. Its function is as follows. Required for maturation of 30S ribosomal subunits. This chain is Ribosome maturation factor RimP, found in Cereibacter sphaeroides (strain ATCC 17025 / ATH 2.4.3) (Rhodobacter sphaeroides).